The sequence spans 154 residues: Hydroperoxy fatty acid reductase Gpx2 (154 aa).

C34 is a catalytic residue.

Belongs to the glutathione peroxidase family. As to quaternary structure, monomer.

The enzyme catalyses a hydroperoxy polyunsaturated fatty acid + NADPH + H(+) = a hydroxy polyunsaturated fatty acid + NADP(+) + H2O. With respect to regulation, mercaptosuccinate, pCMB, and nethylmaleimide act as inhibitors of the catalytic activity. Hydroperoxy fatty acid reductase essential for the removal of lipid hydroperoxides under normal and stress conditions, leading to the protection of membrane integrity. The protein is Hydroperoxy fatty acid reductase Gpx2 (gpx2) of Synechocystis sp. (strain ATCC 27184 / PCC 6803 / Kazusa).